Consider the following 31-residue polypeptide: Cytochrome b6-f complex subunit 6 (31 aa).

Residues 4-26 traverse the membrane as a helical segment; that stretch reads ITSYFGFLLAALTITPALLISLN.

This sequence belongs to the PetL family. The 4 large subunits of the cytochrome b6-f complex are cytochrome b6, subunit IV (17 kDa polypeptide, PetD), cytochrome f and the Rieske protein, while the 4 small subunits are PetG, PetL, PetM and PetN. The complex functions as a dimer.

It localises to the plastid. Its subcellular location is the chloroplast thylakoid membrane. Functionally, component of the cytochrome b6-f complex, which mediates electron transfer between photosystem II (PSII) and photosystem I (PSI), cyclic electron flow around PSI, and state transitions. PetL is important for photoautotrophic growth as well as for electron transfer efficiency and stability of the cytochrome b6-f complex. The chain is Cytochrome b6-f complex subunit 6 from Dioscorea elephantipes (Elephant's foot yam).